A 588-amino-acid polypeptide reads, in one-letter code: Adenylate kinase 5, chloroplastic (588 aa).

Residues Met1 to Leu34 are disordered. Residues Met1 to Arg73 constitute a chloroplast transit peptide. Ala89–Thr94 contacts ATP. The segment at Ser109–Val138 is NMP. AMP is bound by residues Arg115, Ser136–Val138, Gly165–Arg168, and Gln172. Residues Gly202 to Asp235 are LID. Arg203 provides a ligand contact to ATP. Positions 232 and 243 each coordinate AMP.

Belongs to the adenylate kinase family. In terms of assembly, monomer.

It is found in the plastid. It localises to the chloroplast. It catalyses the reaction AMP + ATP = 2 ADP. Catalyzes the reversible transfer of the terminal phosphate group between ATP and AMP. This chain is Adenylate kinase 5, chloroplastic, found in Arabidopsis thaliana (Mouse-ear cress).